The sequence spans 276 residues: 2-dehydro-3-deoxyphosphooctonate aldolase (276 aa).

Belongs to the KdsA family.

The protein resides in the cytoplasm. It catalyses the reaction D-arabinose 5-phosphate + phosphoenolpyruvate + H2O = 3-deoxy-alpha-D-manno-2-octulosonate-8-phosphate + phosphate. It participates in carbohydrate biosynthesis; 3-deoxy-D-manno-octulosonate biosynthesis; 3-deoxy-D-manno-octulosonate from D-ribulose 5-phosphate: step 2/3. Its pathway is bacterial outer membrane biogenesis; lipopolysaccharide biosynthesis. This Stenotrophomonas maltophilia (strain R551-3) protein is 2-dehydro-3-deoxyphosphooctonate aldolase.